A 544-amino-acid polypeptide reads, in one-letter code: Chaperonin GroEL (544 aa).

Residues 30-33 (TLGP), Lys51, 87-91 (DGTTT), Gly415, and Asp495 each bind ATP.

Belongs to the chaperonin (HSP60) family. In terms of assembly, forms a cylinder of 14 subunits composed of two heptameric rings stacked back-to-back. Interacts with the co-chaperonin GroES.

The protein resides in the cytoplasm. The catalysed reaction is ATP + H2O + a folded polypeptide = ADP + phosphate + an unfolded polypeptide.. Together with its co-chaperonin GroES, plays an essential role in assisting protein folding. The GroEL-GroES system forms a nano-cage that allows encapsulation of the non-native substrate proteins and provides a physical environment optimized to promote and accelerate protein folding. The protein is Chaperonin GroEL of Neisseria meningitidis serogroup C (strain 053442).